We begin with the raw amino-acid sequence, 247 residues long: Chaperone protein NfaE (247 aa).

The signal sequence occupies residues 1 to 29; sequence MKMRAVAVFTGMLTGVLSVTGLLSAGAYA. Positions 106–125 are disordered; the sequence is GQQSSRRRSVSTGGEFPSDR.

It belongs to the periplasmic pilus chaperone family.

The protein localises to the periplasm. In terms of biological role, involved in the biogenesis of the NFA-I adhesin. This is Chaperone protein NfaE (nfaE) from Escherichia coli.